The following is a 627-amino-acid chain: MSVISIVPLASKPCLYKSFISSTHEPKALRRPISTVGLCRRAKSVTASMSMSSSTALSDDGVQRRIGNHHSNLWDDNFIQSLSSPYGASSYAERAERLIGEVKEIFNRISMANGELVSHVDDLLQHLSMVDNVERLGIDRHFQTEIKVSLDYVYSYWSEKGIGPGRDIVCADLNTTALGFRLLRLHGYTMFPDVFEQFKDQMGRIACSTNQTERQISSILNLFRASLIAFPWEKVMEEAEIFSTAYLKEALQTIPVSSLSREIQYVLDYRWHSDLPRLETRTYIDILRENATNETLDMKTEKLLELAKVEFNIFNSLQQNELKCVSRWWKESGSPDLTFIRHRQVEFYTLVSGIDMEPKRSTFRINFVKICHFVTILDDMYDTFGTIDELRLFTAAVKRWDKSATECLPEYMKGVYIDLYETVNELAREAYKSQGRDTLNYARQALEDYLGSYLKEAEWISTGYIPTFEEYLVNGKVSSAHRIATLQPILMLDVPFPPHVLQEIDFPSKFNDLAGSILRLRGDTRCYQNDRARGEEASCISCYMKDNPGSTEEDALNHINGMIEKQIKELNWELLKPDKNVPISSKKHAFNISRGLHHFYKYRDGYTVANSETRNLVIKTVLEPVPM.

Residues 1-36 (MSVISIVPLASKPCLYKSFISSTHEPKALRRPISTV) constitute a chloroplast transit peptide. Residues D378, D382, and D530 each coordinate Mg(2+). A DDXXD motif motif is present at residues 378–382 (DDMYD).

It belongs to the terpene synthase family. Tpsd subfamily. It depends on Mg(2+) as a cofactor. Requires Mn(2+) as cofactor.

Its subcellular location is the plastid. The protein resides in the chloroplast. The enzyme catalyses (2E)-geranyl diphosphate = (+)-car-3-ene + diphosphate. It functions in the pathway terpene metabolism; oleoresin biosynthesis. Functionally, terpene synthase (TPS) involved in the biosynthesis of monoterpene natural products included in conifer oleoresin secretions and volatile emissions; these compounds contribute to biotic and abiotic stress defense against herbivores (e.g. insect attack by white pine weevil P.strobi) and pathogens. Catalyzes the conversion of (2E)-geranyl diphosphate (GPP) to (+)-car-3-ene. The chain is (+)-3-carene synthase 1, chloroplastic from Picea sitchensis (Sitka spruce).